Reading from the N-terminus, the 249-residue chain is Methionine aminopeptidase 2 (249 aa).

His76 contributes to the substrate binding site. Residues Asp94, Asp105, and His168 each coordinate a divalent metal cation. Substrate is bound at residue His175. A divalent metal cation-binding residues include Glu202 and Glu233.

In terms of assembly, monomer. The cofactor is Co(2+). Zn(2+) is required as a cofactor. Mn(2+) serves as cofactor. Requires Fe(2+) as cofactor.

The protein localises to the cytoplasm. It carries out the reaction Release of N-terminal amino acids, preferentially methionine, from peptides and arylamides.. Its function is as follows. Removes the N-terminal methionine from nascent proteins. The N-terminal methionine is often cleaved when the second residue in the primary sequence is small and uncharged (Met-Ala-, Cys, Gly, Pro, Ser, Thr, or Val). Requires deformylation of the N(alpha)-formylated initiator methionine before it can be hydrolyzed. The protein is Methionine aminopeptidase 2 of Bacillus subtilis (strain 168).